The chain runs to 154 residues: Hydroperoxy fatty acid reductase Gpx2 (154 aa).

C34 is an active-site residue.

The protein belongs to the glutathione peroxidase family. In terms of assembly, monomer.

It catalyses the reaction a hydroperoxy polyunsaturated fatty acid + NADPH + H(+) = a hydroxy polyunsaturated fatty acid + NADP(+) + H2O. Mercaptosuccinate, pCMB, and nethylmaleimide act as inhibitors of the catalytic activity. Its function is as follows. Hydroperoxy fatty acid reductase essential for the removal of lipid hydroperoxides under normal and stress conditions, leading to the protection of membrane integrity. This chain is Hydroperoxy fatty acid reductase Gpx2 (gpx2), found in Synechocystis sp. (strain ATCC 27184 / PCC 6803 / Kazusa).